A 167-amino-acid chain; its full sequence is Mediator of RNA polymerase II transcription subunit 10 (167 aa).

The disordered stretch occupies residues 54-92 (STHTKPHPPPPPPPQPTDPTTAAAPALRDNPDPPLSSIQ). The span at 60–70 (HPPPPPPPQPT) shows a compositional bias: pro residues.

The protein belongs to the Mediator complex subunit 10 family. In terms of assembly, component of the Mediator complex.

The protein localises to the nucleus. Component of the Mediator complex, a coactivator involved in the regulated transcription of nearly all RNA polymerase II-dependent genes. Mediator functions as a bridge to convey information from gene-specific regulatory proteins to the basal RNA polymerase II transcription machinery. Mediator is recruited to promoters by direct interactions with regulatory proteins and serves as a scaffold for the assembly of a functional preinitiation complex with RNA polymerase II and the general transcription factors. The sequence is that of Mediator of RNA polymerase II transcription subunit 10 (nut2) from Aspergillus clavatus (strain ATCC 1007 / CBS 513.65 / DSM 816 / NCTC 3887 / NRRL 1 / QM 1276 / 107).